We begin with the raw amino-acid sequence, 558 residues long: Nuclear speckle splicing regulatory protein 1 (558 aa).

The segment at 21–54 is disordered; it reads PVLQKPSVFGNDSDDDDETSVSESLQREAAKKQA. Phosphoserine occurs at positions 27 and 33. Residues 104–170 are a coiled coil; sequence IHNLLKAVEI…REKRAAALEA (67 aa). Positions 106–170 are necessary for alternative splicing activity; it reads NLLKAVEIRK…REKRAAALEA (65 aa). Glycyl lysine isopeptide (Lys-Gly) (interchain with G-Cter in SUMO2) cross-links involve residues K199 and K210. Over residues 204 to 215 the composition is skewed to basic and acidic residues; it reads EARSGIKEEKSR. The segment at 204 to 534 is disordered; the sequence is EARSGIKEEK…KRNNEETVMS (331 aa). Residues 216-226 show a composition bias toward polar residues; sequence GFSNEVSSKNR. 3 positions are modified to phosphoserine: S248, S254, and S255. The span at 250–280 shows a compositional bias: basic and acidic residues; it reads FDAKSSADDEIEETRVNCRREKVIETPENDF. T275 bears the Phosphothreonine mark. A Glycyl lysine isopeptide (Lys-Gly) (interchain with G-Cter in SUMO2) cross-link involves residue K281. A compositionally biased stretch (basic residues) spans 299–310; it reads STRHHTKGSRTS. Basic and acidic residues-rich tracts occupy residues 311-442, 449-487, and 501-517; these read RGHE…KREV, RNQD…RNQE, and RLTE…ERPP. Residues 379-427 adopt a coiled-coil conformation; sequence KREKDREKYSQREQERDRQQNDQNRPSEKGEKEEKSKAKEEHMKVRKER. S457 is modified (phosphoserine).

Belongs to the NSRP1 family. Interacts (via C-terminus) with SRSF1. Interacts (via C-terminus) with SRSF2. Expressed in dendritic cells, T-cells, B-cells and natural killer cells. Expressed in secondary lymphoid organs such as spleen and mesenteric, axillary and brachial lymph nodes.

Its subcellular location is the nucleus. The protein localises to the nucleus speckle. In terms of biological role, RNA-binding protein that mediates pre-mRNA alternative splicing regulation. In Homo sapiens (Human), this protein is Nuclear speckle splicing regulatory protein 1 (NSRP1).